The following is an 80-amino-acid chain: OMEGA-myrmeciitoxin(02)-Mg1a (80 aa).

The signal sequence occupies residues 1-30 (MKNNYISTCIVYLMAALLLISVISIKECTA). The 41-residue stretch at 35–75 (YGDPCSDDLKDYCIHGDCFFLKELNQPACRCYTGYYGSRCE) folds into the EGF-like domain. 3 disulfide bridges follow: Cys39/Cys52, Cys47/Cys63, and Cys65/Cys74.

Belongs to the EGF domain peptide family. Expressed by the venom gland.

The protein resides in the secreted. In terms of biological role, ant peptide with probable defensive activity which acts as a potent agonist of the mammalian epidermal growth factor receptor (EGFR) (EC(50)=6.3 nM). Mimics, both structurally and functionally, vertebrate epidermal growth factor (EGF) peptide hormones. In vivo, intraplantar injection in mice causes long-lasting (several days) hypersensitivity of the injected paw to both mechanical and thermal stimuli. Its long-lasting effect is unusual for venom toxins whose effects are usually immediate. One possible explanation is that it would reduce the duration of a nest attack, discourage future attacks, or enhance the actions of subsequent exposure to other pain-inducing venom peptides. This is OMEGA-myrmeciitoxin(02)-Mg1a from Myrmecia gulosa (Red bulldog ant).